The sequence spans 285 residues: ATP phosphoribosyltransferase (285 aa).

It belongs to the ATP phosphoribosyltransferase family. Long subfamily. The cofactor is Mg(2+).

The protein localises to the cytoplasm. It catalyses the reaction 1-(5-phospho-beta-D-ribosyl)-ATP + diphosphate = 5-phospho-alpha-D-ribose 1-diphosphate + ATP. The protein operates within amino-acid biosynthesis; L-histidine biosynthesis; L-histidine from 5-phospho-alpha-D-ribose 1-diphosphate: step 1/9. Its activity is regulated as follows. Feedback inhibited by histidine. Its function is as follows. Catalyzes the condensation of ATP and 5-phosphoribose 1-diphosphate to form N'-(5'-phosphoribosyl)-ATP (PR-ATP). Has a crucial role in the pathway because the rate of histidine biosynthesis seems to be controlled primarily by regulation of HisG enzymatic activity. This Metallosphaera sedula (strain ATCC 51363 / DSM 5348 / JCM 9185 / NBRC 15509 / TH2) protein is ATP phosphoribosyltransferase.